Here is a 394-residue protein sequence, read N- to C-terminus: Phosphoglycerate kinase (394 aa).

Substrate contacts are provided by residues 21-23 (DLN), Arg-36, 60-63 (HLGN), Arg-114, and Arg-147. ATP is bound by residues Lys-198, Glu-315, and 341-344 (GGET).

This sequence belongs to the phosphoglycerate kinase family. Monomer.

The protein localises to the cytoplasm. The catalysed reaction is (2R)-3-phosphoglycerate + ATP = (2R)-3-phospho-glyceroyl phosphate + ADP. Its pathway is carbohydrate degradation; glycolysis; pyruvate from D-glyceraldehyde 3-phosphate: step 2/5. The protein is Phosphoglycerate kinase of Wigglesworthia glossinidia brevipalpis.